We begin with the raw amino-acid sequence, 377 residues long: DnaJ-related protein SCJ1 (377 aa).

The N-terminal stretch at 1–21 (MIPKLYIHLILSLLLLPLILA) is a signal peptide. Residues 23–88 (DYYAILEIDK…EKKKIYDQFG (66 aa)) enclose the J domain. A CR-type zinc finger spans residues 156–237 (GSSIEFTLNL…CHGKKVTKKN (82 aa)). CXXCXGXG motif repeat units lie at residues 169–176 (CDACHGSG), 185–192 (CPDCQGRG), 211–218 (CGRCGGTG), and 225–232 (CKTCHGKK). Residues 288–290 (RGD) carry the Cell attachment site motif. Residues 374-377 (KDEL) carry the Prevents secretion from ER motif.

The protein resides in the endoplasmic reticulum lumen. In terms of biological role, regulates protein folding in the endoplasmic reticulum lumen. Probably acts as a J-protein for the Hsp70-type chaperone KAR2 by stimulating its ATP-dependent reaction cycle and initiating folding reactions. Also involved in the endoplasmic reticulum-associated degradation (ERAD) process. Cooperates with KAR2 and another J-protein JEM1 to facilitate the export of ERAD substrates to the cytoplasm by maintaining them in a translocation-competent state and preventing their aggregation in the endoplasmic reticulum lumen. The polypeptide is DnaJ-related protein SCJ1 (SCJ1) (Saccharomyces cerevisiae (strain ATCC 204508 / S288c) (Baker's yeast)).